A 264-amino-acid chain; its full sequence is Thymidylate synthase (264 aa).

DUMP-binding positions include arginine 21 and 126–127; that span reads RR. The Nucleophile role is filled by cysteine 146. Residues 166-169, asparagine 177, and 207-209 contribute to the dUMP site; these read RSAD and HLY. Aspartate 169 is a binding site for (6R)-5,10-methylene-5,6,7,8-tetrahydrofolate. Residue alanine 263 participates in (6R)-5,10-methylene-5,6,7,8-tetrahydrofolate binding.

The protein belongs to the thymidylate synthase family. Bacterial-type ThyA subfamily. As to quaternary structure, homodimer.

It is found in the cytoplasm. The enzyme catalyses dUMP + (6R)-5,10-methylene-5,6,7,8-tetrahydrofolate = 7,8-dihydrofolate + dTMP. Its pathway is pyrimidine metabolism; dTTP biosynthesis. Catalyzes the reductive methylation of 2'-deoxyuridine-5'-monophosphate (dUMP) to 2'-deoxythymidine-5'-monophosphate (dTMP) while utilizing 5,10-methylenetetrahydrofolate (mTHF) as the methyl donor and reductant in the reaction, yielding dihydrofolate (DHF) as a by-product. This enzymatic reaction provides an intracellular de novo source of dTMP, an essential precursor for DNA biosynthesis. In Rhodopseudomonas palustris (strain HaA2), this protein is Thymidylate synthase.